We begin with the raw amino-acid sequence, 385 residues long: Cytochrome b (385 aa).

4 helical membrane-spanning segments follow: residues 32–52 (FGSL…TLAM), 76–98 (WFIR…AHMG), 113–133 (PWSI…MGYV), and 179–199 (FFAL…LHLI). The heme b site is built by His-82 and His-96. Positions 183 and 197 each coordinate heme b. His-202 is an a ubiquinone binding site. Helical transmembrane passes span 225 to 245 (YSFK…LFVF), 289 to 309 (LGGV…PIVD), 321 to 341 (ISKL…VLGQ), and 348 to 368 (FIVL…ILLP).

Belongs to the cytochrome b family. Fungal cytochrome b-c1 complex contains 10 subunits; 3 respiratory subunits, 2 core proteins and 5 low-molecular weight proteins. Cytochrome b-c1 complex is a homodimer. Requires heme b as cofactor.

The protein resides in the mitochondrion inner membrane. Component of the ubiquinol-cytochrome c reductase complex (complex III or cytochrome b-c1 complex) that is part of the mitochondrial respiratory chain. The b-c1 complex mediates electron transfer from ubiquinol to cytochrome c. Contributes to the generation of a proton gradient across the mitochondrial membrane that is then used for ATP synthesis. The protein is Cytochrome b (COB) of Yarrowia lipolytica (strain CLIB 122 / E 150) (Yeast).